A 38-amino-acid chain; its full sequence is Putative ORF10 protein (38 aa).

In terms of assembly, binds host ZYG11B. This would not play any role in SARS-CoV-2 infection.

The polypeptide is Putative ORF10 protein (Severe acute respiratory syndrome coronavirus 2 (2019-nCoV)).